We begin with the raw amino-acid sequence, 371 residues long: DNA replication and repair protein RecF (371 aa).

Position 30–37 (30–37) interacts with ATP; that stretch reads GANAQGKT.

It belongs to the RecF family.

The protein localises to the cytoplasm. Its function is as follows. The RecF protein is involved in DNA metabolism; it is required for DNA replication and normal SOS inducibility. RecF binds preferentially to single-stranded, linear DNA. It also seems to bind ATP. The polypeptide is DNA replication and repair protein RecF (Lacticaseibacillus paracasei (strain ATCC 334 / BCRC 17002 / CCUG 31169 / CIP 107868 / KCTC 3260 / NRRL B-441) (Lactobacillus paracasei)).